Here is a 211-residue protein sequence, read N- to C-terminus: CASP-like protein 1B1 (211 aa).

The segment at 1 to 29 is disordered; the sequence is MDLERGSKTPPSSAPAAAAATTTTSTCCS. Residues 1–55 are Cytoplasmic-facing; it reads MDLERGSKTPPSSAPAAAAATTTTSTCCSNKRPQLRDRLVALQPVVLRAAATLAT. The segment covering 9–26 has biased composition (low complexity); it reads TPPSSAPAAAAATTTTST. The chain crosses the membrane as a helical span at residues 56–76; sequence AVAAAVMALNAQSYTAVVAIV. The Extracellular portion of the chain corresponds to 77–94; sequence GTRPLTQTFTTKFRDTPA. A helical membrane pass occupies residues 95–115; it reads FVYFVIANAIAAVYNLVMLLF. Residues 116–123 lie on the Cytoplasmic side of the membrane; sequence RCLILRRR. Residues 124–144 form a helical membrane-spanning segment; that stretch reads MAGLVVHMLDMVIMALLATGA. Topologically, residues 145–176 are extracellular; the sequence is ATAAAMAELGKNGNVHARWNPICDRFGSFCSR. The chain crosses the membrane as a helical span at residues 177–197; it reads GGVALASSFTGVALMLALNLL. At 198-211 the chain is on the cytoplasmic side; that stretch reads SAASNAQCSPGQYE.

It belongs to the Casparian strip membrane proteins (CASP) family. Homodimer and heterodimers.

Its subcellular location is the cell membrane. The protein is CASP-like protein 1B1 of Sorghum bicolor (Sorghum).